Reading from the N-terminus, the 217-residue chain is Somatotropin (217 aa).

Residues 1–26 form the signal peptide; the sequence is MMAAGPRTSLLLAFALLCLPWTQVVG. A Zn(2+)-binding site is contributed by H46. C79 and C190 form a disulfide bridge. S132 bears the Phosphoserine mark. A Zn(2+)-binding site is contributed by E199. A disulfide bond links C207 and C215.

The protein belongs to the somatotropin/prolactin family.

It localises to the secreted. In terms of biological role, plays an important role in growth control. Its major role in stimulating body growth is to stimulate the liver and other tissues to secrete IGF1. It stimulates both the differentiation and proliferation of myoblasts. It also stimulates amino acid uptake and protein synthesis in muscle and other tissues. This chain is Somatotropin (GH1), found in Bos mutus grunniens (Wild yak).